The chain runs to 894 residues: MNQIEPGVQYNYVYDEDEYMIQEEEWDRDLLLDPAWEKQQRKTFTAWCNSHLRKAGTQIENIEEDFRNGLKLMLLLEVISGERLPKPDRGKMRFHKIANVNKALDYIASKGVKLVSIGAEEIVDGNVKMTLGMIWTIILRFAIQDISVEETSAKEGLLLWCQRKTAPYRNVNIQNFHTSWKDGLGLCALIHRHRPDLIDYSKLNKDDPIGNINLAMEIAEKHLDIPKMLDAEDIVNTPKPDERAIMTYVSCFYHAFAGAEQAETAANRICKVLAVNQENERLMEEYERLASELLEWIRRTIPWLENRTPEKTMQAMQKKLEDFRDYRRKHKPPKVQEKCQLEINFNTLQTKLRISNRPAFMPSEGKMVSDIAGAWQRLEQAEKGYEEWLLNEIRRLERLEHLAEKFRQKASTHETWAYGKEQILLQKDYESASLTEVRALLRKHEAFESDLAAHQDRVEQIAAIAQELNELDYHDAVNVNDRCQKICDQWDRLGTLTQKRREALERTEKLLETIDQLHLEFAKRAAPFNNWMEGAMEDLQDMFIVHSIEEIQSLITAHEQFKATLPEADGERQSILAIQNEVEKVIQSYSIRISSSNPYSTVTMDELRNKWDKVKQLVPVRDQSLQEELARQHANERLRRQFAAQANAIGPWIQNKMEEIARSSIQITGALEDQMNQLKQYEHNIINYKNNIDKLEGDHQLIQEALVFDNKHTNYTMEHIRVGWELLLTTIARTINEVETQILTRDAKGITQEQMNEFRASFNHFDRRKNGLMDHEDFRACLISMGYDLGEAEFARIMTLVDPNGQGTVTFQSFIDFMTRETADTDTAEQVIASFRILASDKPYILAEELRRELPPDQAQYCIKRMPPYSGPGSVPGALDYTAFSSALYGESDL.

An actin-binding region spans residues 1-254; sequence MNQIEPGVQY…IMTYVSCFYH (254 aa). Calponin-homology (CH) domains lie at 38 to 142 and 151 to 257; these read KQQR…LRFA and TSAK…HAFA. Threonine 237 bears the Phosphothreonine mark. Spectrin repeat units lie at residues 281–391, 401–506, 516–627, and 637–740; these read RLME…WLLN, HLAE…ALER, QLHL…SLQE, and RLRR…EVET. EF-hand domains are found at residues 753–788 and 789–824; these read EQMN…MGYD and LGEA…ETAD. Positions 766, 770, 777, 802, 804, and 808 each coordinate Ca(2+).

Belongs to the alpha-actinin family. As to quaternary structure, homodimer; antiparallel. Also forms heterodimers with ACTN3. Interacts with ADAM12, MYOZ1, MYOZ2 and MYOZ3. Interacts via its C-terminal region with the LDB3 PDZ domain. Interacts with XIRP2. Interacts with DST (via N-terminus). Interacts with PARVB. Interacts with SYNPO2. Post-translationally, ubiquitinated by FBXL22, leading to proteasomal degradation.

It is found in the cytoplasm. The protein localises to the myofibril. It localises to the sarcomere. Its subcellular location is the z line. In terms of biological role, F-actin cross-linking protein which is thought to anchor actin to a variety of intracellular structures. This is a bundling protein. This Mus musculus (Mouse) protein is Alpha-actinin-2 (Actn2).